A 181-amino-acid polypeptide reads, in one-letter code: Achaete-scute homolog 3 (181 aa).

The interval 93–106 (AFTRKRNERERQRV) is basic motif. Positions 93–145 (AFTRKRNERERQRVKCVNEGYAQLRHHLPEEYLEKRLSKVETLRAAIKYINYL) constitute a bHLH domain. The interval 107-145 (KCVNEGYAQLRHHLPEEYLEKRLSKVETLRAAIKYINYL) is helix-loop-helix motif.

Efficient DNA binding requires dimerization with another bHLH protein. As to expression, widely expressed in fetal and adult tissues.

It is found in the nucleus. Its function is as follows. Transcriptional repressor. Inhibits myogenesis. Plays a role in progenitor cells which differentiate into ductal and acinar, but not myoepithelial, cell lineages in the salivary glands. Involved in the functions of the microvillar cells and Bowman's glands and probably, in a non-cell-autonomous manner, in the development or regeneration of a complete olfactory epithelium (OE). The chain is Achaete-scute homolog 3 from Homo sapiens (Human).